The sequence spans 98 residues: NADH-ubiquinone oxidoreductase chain 4L (98 aa).

The next 3 membrane-spanning stretches (helical) occupy residues 1 to 21, 29 to 49, and 61 to 81; these read MSLT…GLLM, SLLC…VTIL, and IILL…LVMV.

The protein belongs to the complex I subunit 4L family. As to quaternary structure, core subunit of respiratory chain NADH dehydrogenase (Complex I) which is composed of 45 different subunits.

The protein resides in the mitochondrion inner membrane. It carries out the reaction a ubiquinone + NADH + 5 H(+)(in) = a ubiquinol + NAD(+) + 4 H(+)(out). Functionally, core subunit of the mitochondrial membrane respiratory chain NADH dehydrogenase (Complex I) which catalyzes electron transfer from NADH through the respiratory chain, using ubiquinone as an electron acceptor. Part of the enzyme membrane arm which is embedded in the lipid bilayer and involved in proton translocation. In Sturnira lilium (Lesser yellow-shouldered bat), this protein is NADH-ubiquinone oxidoreductase chain 4L (MT-ND4L).